The following is a 299-amino-acid chain: Nitrogenase iron protein (299 aa).

An ATP-binding site is contributed by 8 to 15 (GKGGIGKS). Residue cysteine 96 coordinates [4Fe-4S] cluster. At arginine 99 the chain carries ADP-ribosylarginine; by dinitrogenase reductase ADP-ribosyltransferase. Cysteine 130 is a [4Fe-4S] cluster binding site.

The protein belongs to the NifH/BchL/ChlL family. In terms of assembly, homodimer. The cofactor is [4Fe-4S] cluster. In terms of processing, the reversible ADP-ribosylation of Arg-99 inactivates the nitrogenase reductase and regulates nitrogenase activity.

It carries out the reaction N2 + 8 reduced [2Fe-2S]-[ferredoxin] + 16 ATP + 16 H2O = H2 + 8 oxidized [2Fe-2S]-[ferredoxin] + 2 NH4(+) + 16 ADP + 16 phosphate + 6 H(+). Functionally, the key enzymatic reactions in nitrogen fixation are catalyzed by the nitrogenase complex, which has 2 components: the iron protein and the molybdenum-iron protein. This is Nitrogenase iron protein from Gloeothece citriformis (strain PCC 7424) (Cyanothece sp. (strain PCC 7424)).